The chain runs to 461 residues: MRVLIKNGIVVNADGQAKQDLLIESGIVRQLGTDISPQLPCEEIDASGCYVFPGGVDVHTHFNIDVGIARSCDDFFTGTRAAACGGTTTIIDHMGFGPNGCRLRHQLEVYRGYAAHKAVIDYSFHGVIQHINHAILDEIPMMVEEGLSSFKLYLTYQYKLNDDEVLQALRRLHESGALTTVHPENDAAIASKRAEFIAAGLTAPRYHALSRPLECEAEAIARMINLAQIAGNAPLYIVHLSNGLGLDYLRLARANHQPVWVETCPQYLLLDERSYDTEDGMKFILSPPLRNVREQDKLWCGISDGAIDVVATDHCTFSMAQRLQISKGDFSRCPNGLPGVENRMQLLFSSGVMTGRISPERFVELTSAMPARLFGLWPQKGLLAPGSDGDVVIIDPRQSQQIQHRHLHDNADYSPWEGFTCQGAIVRTLSRGETIFCDGTFTGKAGRGRFLRRKPFVPPVL.

Residues H59, H61, and K151 each contribute to the a divalent metal cation site. N6-carboxylysine is present on K151. Y156 contacts substrate. Residues H182 and H239 each contribute to the a divalent metal cation site. Position 286 (S286) interacts with substrate. An a divalent metal cation-binding site is contributed by D313. N335 is a substrate binding site.

The protein belongs to the metallo-dependent hydrolases superfamily. Hydantoinase/dihydropyrimidinase family. As to quaternary structure, homotetramer. A divalent metal cation is required as a cofactor. Post-translationally, carboxylation allows a single lysine to coordinate two divalent metal cations.

It carries out the reaction D-5-phenylhydantoin + H2O = N-carbamoyl-D-phenylglycine + H(+). Functionally, catalyzes the stereospecific hydrolysis of the cyclic amide bond of D-hydantoin derivatives with an aromatic side chains at the 5'-position. Has no activity on dihydropyrimidines. The physiological function is unknown. This Escherichia coli O6:K15:H31 (strain 536 / UPEC) protein is D-phenylhydantoinase.